We begin with the raw amino-acid sequence, 375 residues long: MSRINNADTPTNRRNLSLARGRRRLTYSPSTPMPTPRQTRAPMPTPRQRRSLTPEHVVGDRNAPLRASYTINNSRYNVHGDAEFNPPEDDDDSIIFTDHAAEQARQRAVNLHESLTTTPRSPDYSPVHSPSGQVIDSDDYNSDDDERMLEQILLESAEPPQTPQPAPEPQEDVEVLCHICSCTFTDIKNYNSNFVTSSECNHAVCFKCYVSIVFNKEAYKCSICNRTTLTCRAYNRAGYVELSTVRTVRDNKLIKQHWMQLTESNMPHNRDKTIIEELQLELADLRATTARAHHEVNMIKSDNLLLQQQVDFKNLELQQELNAKVKLQKQNDTLSAANTFLQNQLDAQVAESKIKMDQFVRQHEAFLKKFKSSVM.

A compositionally biased stretch (polar residues) spans 1–12 (MSRINNADTPTN). Disordered regions lie at residues 1–61 (MSRI…VGDR) and 115–142 (LTTT…DYNS). The segment at 177 to 225 (CHICSCTFTDIKNYNSNFVTSSECNHAVCFKCYVSIVFNKEAYKCSICN) adopts an RING-type zinc-finger fold. The stretch at 272–348 (KTIIEELQLE…TFLQNQLDAQ (77 aa)) forms a coiled coil.

Belongs to the alphabaculovirus IE2 protein family. In terms of assembly, homooligomer. Auto-ubiquitinated.

The protein localises to the host nucleus. It catalyses the reaction S-ubiquitinyl-[E2 ubiquitin-conjugating enzyme]-L-cysteine + [acceptor protein]-L-lysine = [E2 ubiquitin-conjugating enzyme]-L-cysteine + N(6)-ubiquitinyl-[acceptor protein]-L-lysine.. RING-finger E3 ubiquitin ligase that plays an important regulatory role during the initial stages of infection. Migrates to specific nuclear foci early in infection supposely to prepare the sites for viral replication by targeting and ubiquitinating host proteins. The protein is E3 ubiquitin-protein ligase IE2 (IE2) of Hyphantria cunea nuclear polyhedrosis virus (HcNPV).